The primary structure comprises 311 residues: Methionyl-tRNA formyltransferase (311 aa).

110-113 (SLLP) contributes to the (6S)-5,6,7,8-tetrahydrofolate binding site.

This sequence belongs to the Fmt family.

It carries out the reaction L-methionyl-tRNA(fMet) + (6R)-10-formyltetrahydrofolate = N-formyl-L-methionyl-tRNA(fMet) + (6S)-5,6,7,8-tetrahydrofolate + H(+). In terms of biological role, attaches a formyl group to the free amino group of methionyl-tRNA(fMet). The formyl group appears to play a dual role in the initiator identity of N-formylmethionyl-tRNA by promoting its recognition by IF2 and preventing the misappropriation of this tRNA by the elongation apparatus. The protein is Methionyl-tRNA formyltransferase of Streptococcus equi subsp. zooepidemicus (strain H70).